Here is a 337-residue protein sequence, read N- to C-terminus: uncharacterized protein (337 aa).

An ABC transporter domain is found at Val-5–Val-235. Residue Gly-37–Thr-44 coordinates ATP.

This sequence belongs to the ABC transporter superfamily.

Its function is as follows. Probably part of the ABC transporter complex YdcSTUV. Probably responsible for energy coupling to the transport system. This is an uncharacterized protein from Escherichia coli (strain K12).